A 66-amino-acid chain; its full sequence is Moricin-1 (66 aa).

The N-terminal stretch at 1–24 (MNILKFFFVFIVAMSLVSCSTAAP) is a signal peptide.

Expressed in fat body and to a lesser extent in hemocyte and Malpighian tubules.

It is found in the secreted. Functionally, has antibacterial activity against Gram-positive and Gram-negative bacteria. Probably acts by disturbing membrane functions with its amphipathic structure. In Bombyx mori (Silk moth), this protein is Moricin-1 (MOR1).